A 657-amino-acid chain; its full sequence is 1-deoxy-D-xylulose-5-phosphate synthase (657 aa).

Residues histidine 73 and 113–115 each bind thiamine diphosphate; that span reads SHA. Mg(2+) is bound at residue aspartate 145. Thiamine diphosphate contacts are provided by residues 146–147, asparagine 175, tyrosine 293, and glutamate 375; that span reads GA. A Mg(2+)-binding site is contributed by asparagine 175.

Belongs to the transketolase family. DXPS subfamily. In terms of assembly, homodimer. It depends on Mg(2+) as a cofactor. The cofactor is thiamine diphosphate.

It catalyses the reaction D-glyceraldehyde 3-phosphate + pyruvate + H(+) = 1-deoxy-D-xylulose 5-phosphate + CO2. Its pathway is metabolic intermediate biosynthesis; 1-deoxy-D-xylulose 5-phosphate biosynthesis; 1-deoxy-D-xylulose 5-phosphate from D-glyceraldehyde 3-phosphate and pyruvate: step 1/1. Functionally, catalyzes the acyloin condensation reaction between C atoms 2 and 3 of pyruvate and glyceraldehyde 3-phosphate to yield 1-deoxy-D-xylulose-5-phosphate (DXP). The protein is 1-deoxy-D-xylulose-5-phosphate synthase of Paenarthrobacter aurescens (strain TC1).